The chain runs to 505 residues: RNA-binding region-containing protein 3 (505 aa).

The RRM 1 domain occupies 15-90; sequence KTLIIRHLPR…RTLVVEFAKD (76 aa). Disordered stretches follow at residues 96-123, 193-236, 354-374, and 486-505; these read ILKDPPVSDRTAAAVAEKEKKEKQQPSV, PPMF…EEER, AQVPRQEEEQEEDEDIPSEFI, and ARSAKPKQESADPKKGGRKH. Over residues 193 to 214 the composition is skewed to pro residues; it reads PPMFEMPSGPLPPPFPPENPPL. 2 stretches are compositionally biased toward acidic residues: residues 221-235 and 361-370; these read GSEEESEYESEDEEE and EEQEEDEDIP. The RRM 2 domain occupies 405 to 488; the sequence is CRLYVKNVAK…KPLVVQFARS (84 aa). Over residues 491–505 the composition is skewed to basic and acidic residues; it reads PKQESADPKKGGRKH.

As to quaternary structure, component of the U11/U12 snRNPs that are part of the U12-type spliceosome.

Its subcellular location is the nucleus. Its function is as follows. Participates in pre-mRNA U12-dependent splicing, performed by the minor spliceosome which removes U12-type introns. U12-type introns comprise less than 1% of all non-coding sequences. The sequence is that of RNA-binding region-containing protein 3 from Danio rerio (Zebrafish).